Reading from the N-terminus, the 141-residue chain is Hemoglobin subunit alpha (141 aa).

The region spanning 1–141 (VLSDKDKTNV…VSTVLTSKYR (141 aa)) is the Globin domain. The residue at position 3 (S3) is a Phosphoserine. N6-succinyllysine is present on K7. Residue T8 is modified to Phosphothreonine. The residue at position 11 (K11) is an N6-succinyllysine. K16 bears the N6-acetyllysine; alternate mark. At K16 the chain carries N6-succinyllysine; alternate. The residue at position 24 (Y24) is a Phosphotyrosine. At S35 the chain carries Phosphoserine. K40 is subject to N6-succinyllysine. S49 is modified (phosphoserine). H58 provides a ligand contact to O2. A heme b-binding site is contributed by H87. Phosphoserine is present on S102. T108 carries the phosphothreonine modification. Position 124 is a phosphoserine (S124). A phosphothreonine mark is found at T134 and T137. S138 is modified (phosphoserine).

This sequence belongs to the globin family. In terms of assembly, heterotetramer of two alpha chains and two beta chains. In terms of tissue distribution, red blood cells.

Functionally, involved in oxygen transport from the lung to the various peripheral tissues. In terms of biological role, hemopressin acts as an antagonist peptide of the cannabinoid receptor CNR1. Hemopressin-binding efficiently blocks cannabinoid receptor CNR1 and subsequent signaling. In Elephas maximus (Indian elephant), this protein is Hemoglobin subunit alpha (HBA).